A 365-amino-acid chain; its full sequence is Putative fatty acid elongase 2 (365 aa).

Over 1-68 the chain is Lumenal; it reads MPDSPTLHHN…SFEFIVNKTR (68 aa). 2 N-linked (GlcNAc...) asparagine glycosylation sites follow: Asn17 and Asn65. The helical transmembrane segment at 69 to 89 threads the bilayer; it reads FSSAPVVATIIISYYLLILVG. Topologically, residues 90–111 are cytoplasmic; the sequence is GRIMRNRQPIRLQKIFQYYNLT. A helical membrane pass occupies residues 112–132; sequence FSIASAILALLIFEQVAPAIY. Over 133–149 the chain is Lumenal; it reads KHGFFFSICNEKAWTQP. A helical membrane pass occupies residues 150–170; that stretch reads LVFLYYCAYISKFLELTDTFF. The Cytoplasmic portion of the chain corresponds to 171–179; it reads LVLRKKPLQ. The chain crosses the membrane as a helical span at residues 180-198; sequence FLHCYHHGATAVLVYTQIV. Residues 199–204 are Lumenal-facing; sequence GRTSIS. The chain crosses the membrane as a helical span at residues 205-225; sequence WLIIEINLLVHVTMYYYYYLV. Over 226–241 the chain is Cytoplasmic; that stretch reads AKGIRVPWKKWVTRFQ. A helical transmembrane segment spans residues 242-262; it reads IVQFFADLGFIYFAVYTEVAY. Over 263–278 the chain is Lumenal; that stretch reads RLKFYKACMGHCSGHP. The helical transmembrane segment at 279–299 threads the bilayer; that stretch reads LAAFCGLATISSYLVLFIVFY. Residues 300–365 are Cytoplasmic-facing; that stretch reads HNTYKKNAAL…PISSGLNNEK (66 aa).

Belongs to the ELO family.

The protein localises to the endoplasmic reticulum membrane. The catalysed reaction is a very-long-chain acyl-CoA + malonyl-CoA + H(+) = a very-long-chain 3-oxoacyl-CoA + CO2 + CoA. In terms of biological role, may be involved in the synthesis of very long chain fatty acids. This is Putative fatty acid elongase 2 from Schizosaccharomyces pombe (strain 972 / ATCC 24843) (Fission yeast).